Here is a 571-residue protein sequence, read N- to C-terminus: Glutamine--tRNA ligase (571 aa).

The 'HIGH' region motif lies at 35–45 (PEPNGYLHIGH). ATP-binding positions include 36 to 38 (EPN) and 42 to 48 (HIGHAKS). L-glutamine-binding residues include Asp68 and Tyr213. ATP contacts are provided by residues Thr232, 262-263 (RL), and 270-272 (LSK). Positions 269-273 (ILSKR) match the 'KMSKS' region motif.

This sequence belongs to the class-I aminoacyl-tRNA synthetase family. Monomer.

It is found in the cytoplasm. It catalyses the reaction tRNA(Gln) + L-glutamine + ATP = L-glutaminyl-tRNA(Gln) + AMP + diphosphate. The sequence is that of Glutamine--tRNA ligase from Buchnera aphidicola subsp. Acyrthosiphon pisum (strain APS) (Acyrthosiphon pisum symbiotic bacterium).